The sequence spans 95 residues: Cliotide T1 (95 aa).

Residues 1–30 (GIPCGESCVFIPCITGAIGCSCKSKVCYRN) constitute a cross-link (cyclopeptide (Gly-Asn)). Intrachain disulfides connect Cys-4/Cys-20, Cys-8/Cys-22, and Cys-13/Cys-27. A propeptide spans 31–95 (HVIAAEAKTM…KDHLKMSITN (65 aa)) (removed in mature form).

Contains 3 disulfide bonds. In terms of processing, this is a cyclic peptide. As to expression, expressed in flower, stem, shoot, root, leaf, seed, pod and nodule (at protein level).

In terms of biological role, probably participates in a plant defense mechanism. Active against Gram-negative bacteria E.coli ATCC 700926 (MIC=1.1 uM), K.pneumoniae ATTC 13883 (MIC=2.7 uM) and P.aeruginosa ATCC 39018 (MIC=4.7 uM). Has hemolytic and cytotoxic activity. In Clitoria ternatea (Butterfly pea), this protein is Cliotide T1.